The primary structure comprises 560 residues: Nibrin homolog (560 aa).

In terms of domain architecture, FHA spans 25–87 (YKVGRKDCDV…YGTFFNKVQG (63 aa)). The BRCT domain occupies 115–190 (TFRLSFVPIV…KQIVLGDWFK (76 aa)). The Nuclear localization signal motif lies at 511–518 (YKRGTVID).

This sequence belongs to the Nibrin family. In terms of assembly, component of the MRN complex composed of two heterodimers RAD50 and MRE11 associated with a single NBS1.

It is found in the nucleus. It localises to the chromosome. In terms of biological role, component of the MRN complex, which plays a central role in double-strand break (DSB) repair, DNA recombination, maintenance of telomere integrity and meiosis. The MRN complex is involved in the repair of DNA double-strand breaks (DSBs) via homologous recombination (HR), an error-free mechanism which primarily occurs during S and G2 phases. The complex (1) mediates the end resection of damaged DNA, which generates proper single-stranded DNA, a key initial steps in HR, and is (2) required for the recruitment of other repair factors and efficient activation of ATM and ATR upon DNA damage. The MRN complex possesses single-strand endonuclease activity and double-strand-specific 3'-5' exonuclease activity, which are provided by MRE11, to initiate end resection, which is required for single-strand invasion and recombination. Within the MRN complex, NBS1 acts as a protein-protein adapter, which specifically recognizes and binds phosphorylated proteins, promoting their recruitment to DNA damage sites. Recruits MRE11 and RAD50 components of the MRN complex to DSBs in response to DNA damage. The polypeptide is Nibrin homolog (Oryza sativa subsp. indica (Rice)).